The sequence spans 355 residues: UDP-N-acetylglucosamine--N-acetylmuramyl-(pentapeptide) pyrophosphoryl-undecaprenol N-acetylglucosamine transferase (355 aa).

UDP-N-acetyl-alpha-D-glucosamine is bound by residues 14–16, Asn126, Arg162, Ser190, Ile243, 262–267, and Gln287; these read TGG and ALTVSE.

It belongs to the glycosyltransferase 28 family. MurG subfamily.

Its subcellular location is the cell inner membrane. The enzyme catalyses di-trans,octa-cis-undecaprenyl diphospho-N-acetyl-alpha-D-muramoyl-L-alanyl-D-glutamyl-meso-2,6-diaminopimeloyl-D-alanyl-D-alanine + UDP-N-acetyl-alpha-D-glucosamine = di-trans,octa-cis-undecaprenyl diphospho-[N-acetyl-alpha-D-glucosaminyl-(1-&gt;4)]-N-acetyl-alpha-D-muramoyl-L-alanyl-D-glutamyl-meso-2,6-diaminopimeloyl-D-alanyl-D-alanine + UDP + H(+). The protein operates within cell wall biogenesis; peptidoglycan biosynthesis. Functionally, cell wall formation. Catalyzes the transfer of a GlcNAc subunit on undecaprenyl-pyrophosphoryl-MurNAc-pentapeptide (lipid intermediate I) to form undecaprenyl-pyrophosphoryl-MurNAc-(pentapeptide)GlcNAc (lipid intermediate II). The polypeptide is UDP-N-acetylglucosamine--N-acetylmuramyl-(pentapeptide) pyrophosphoryl-undecaprenol N-acetylglucosamine transferase (Vibrio parahaemolyticus serotype O3:K6 (strain RIMD 2210633)).